Reading from the N-terminus, the 197-residue chain is Small ribosomal subunit protein uS4c (197 aa).

Positions 85–161 (MRLDNILFRL…TGKELANHLN (77 aa)) constitute an S4 RNA-binding domain.

The protein belongs to the universal ribosomal protein uS4 family. Part of the 30S ribosomal subunit. Contacts protein S5. The interaction surface between S4 and S5 is involved in control of translational fidelity.

It is found in the plastid. In terms of biological role, one of the primary rRNA binding proteins, it binds directly to 16S rRNA where it nucleates assembly of the body of the 30S subunit. Functionally, with S5 and S12 plays an important role in translational accuracy. This is Small ribosomal subunit protein uS4c (rps4) from Cuscuta obtusiflora (Peruvian dodder).